Here is a 369-residue protein sequence, read N- to C-terminus: Phospho-N-acetylmuramoyl-pentapeptide-transferase (369 aa).

10 helical membrane passes run 2–22 (IALL…TPLF), 55–75 (TVVV…MFLM), 86–106 (ALIL…DDFI), 120–140 (AKLI…LNFP), 163–183 (LAFG…NLIV), 196–216 (LDGL…LMGI), 239–259 (PLDL…FLWW), 266–286 (IFMG…FAIL), 291–311 (LLLG…IIQV), and 348–368 (ILGG…WVVL).

The protein belongs to the glycosyltransferase 4 family. MraY subfamily. It depends on Mg(2+) as a cofactor.

The protein resides in the cell membrane. The enzyme catalyses UDP-N-acetyl-alpha-D-muramoyl-L-alanyl-gamma-D-glutamyl-meso-2,6-diaminopimeloyl-D-alanyl-D-alanine + di-trans,octa-cis-undecaprenyl phosphate = di-trans,octa-cis-undecaprenyl diphospho-N-acetyl-alpha-D-muramoyl-L-alanyl-D-glutamyl-meso-2,6-diaminopimeloyl-D-alanyl-D-alanine + UMP. It functions in the pathway cell wall biogenesis; peptidoglycan biosynthesis. Catalyzes the initial step of the lipid cycle reactions in the biosynthesis of the cell wall peptidoglycan: transfers peptidoglycan precursor phospho-MurNAc-pentapeptide from UDP-MurNAc-pentapeptide onto the lipid carrier undecaprenyl phosphate, yielding undecaprenyl-pyrophosphoryl-MurNAc-pentapeptide, known as lipid I. This Pseudarthrobacter chlorophenolicus (strain ATCC 700700 / DSM 12829 / CIP 107037 / JCM 12360 / KCTC 9906 / NCIMB 13794 / A6) (Arthrobacter chlorophenolicus) protein is Phospho-N-acetylmuramoyl-pentapeptide-transferase.